The primary structure comprises 299 residues: MASNCEKMLSKIKIPLPDMLNAVLDLDSSAVIIDQIKNLIKICWSKEEMDRLRNSAGGDKEVLGKCEEIFGELMMVPRIEPKLRVFAFKVEYPSRVSDLKMWMHTIIAATKEITGSVKLFRIMQTSLTMQVLRGSNVECGLDSLVKLCDNVYLMHDFCKLLDFGNDLVHLEAASRIELETITNKMQELFDIEEEVNDEFLASENDGANFVGYRNVVHDFLCTIDGDKQLLNILYAEVGGLVNSYIAEYPSGVRFKEATNILTRFVETFYKSREEIERQAEAEKEILEKRKMNIKQNGNL.

An FH2 domain is found at 1 to 295; it reads MASNCEKMLS…LEKRKMNIKQ (295 aa).

It belongs to the formin-like family. Class-II subfamily.

The chain is Formin-like protein 12 (FH12) from Arabidopsis thaliana (Mouse-ear cress).